We begin with the raw amino-acid sequence, 87 residues long: Large ribosomal subunit protein bL27 (87 aa).

The tract at residues 1 to 22 (MAHKKGQGSVKNGRDSRSKRLG) is disordered.

This sequence belongs to the bacterial ribosomal protein bL27 family.

The protein is Large ribosomal subunit protein bL27 of Akkermansia muciniphila (strain ATCC BAA-835 / DSM 22959 / JCM 33894 / BCRC 81048 / CCUG 64013 / CIP 107961 / Muc).